A 187-amino-acid polypeptide reads, in one-letter code: MLSLDNYSYVHNITTQTNIDLSSQQTIHLASINGKGYIIFLRFFCEGSSACFTNVKFSVKANGLVLYSFRYIQLLELGQAIATAIPSSSQGFSTLLSNYNVLISSPIGTLPQLTLYDSYDNRYGAMLQPAFPLPFVNTLSLDVDILPVSQSSYDPIPYSLNDNQISTNAPTGKGNISIEYLLYNCLV.

A disulfide bridge connects residues cysteine 45 and cysteine 51.

The protein localises to the virion. Functionally, VP10 self-assembles, together with capsid protein VP4, to form an icosahedral caspid of 87 nm in diameter, with a T=43 symmetry and composed of 420 hexamers and 12 pentamers. VP4 proteins arrange into hexons, while VP10 proteins form the pentameric densities located at the 5-fold axes in the virion. The stoichiometry of VP4:VP10 is 42:1. This is Capsid protein VP10 from Sulfolobus polyhedral virus 1 (SPV1).